The chain runs to 157 residues: N5-carboxyaminoimidazole ribonucleotide mutase (157 aa).

Substrate is bound by residues Ser-8, Asp-11, and Arg-38.

The protein belongs to the AIR carboxylase family. Class I subfamily.

The catalysed reaction is 5-carboxyamino-1-(5-phospho-D-ribosyl)imidazole + H(+) = 5-amino-1-(5-phospho-D-ribosyl)imidazole-4-carboxylate. Its pathway is purine metabolism; IMP biosynthesis via de novo pathway; 5-amino-1-(5-phospho-D-ribosyl)imidazole-4-carboxylate from 5-amino-1-(5-phospho-D-ribosyl)imidazole (N5-CAIR route): step 2/2. Its function is as follows. Catalyzes the conversion of N5-carboxyaminoimidazole ribonucleotide (N5-CAIR) to 4-carboxy-5-aminoimidazole ribonucleotide (CAIR). The polypeptide is N5-carboxyaminoimidazole ribonucleotide mutase (Methanocaldococcus jannaschii (strain ATCC 43067 / DSM 2661 / JAL-1 / JCM 10045 / NBRC 100440) (Methanococcus jannaschii)).